The chain runs to 1833 residues: Protein TIC 214 (1833 aa).

The next 6 helical transmembrane spans lie at 18–38 (IINSVVVVGLYYGFLTTFSIG), 67–87 (FIMGQLMMFISIYYTPLHLAL), 90–110 (PHTITVLALPYLLFHFFWNNH), 127–147 (LSIQCVFLNNLIFQLFNYFIL), 175–195 (VGWLIGHILFMKWVGLVLVWI), and 218–238 (IFSILFFITCVYYLGRMPSPI). The segment at 254–301 (EETNLEIEKTSETKETKQEEEGFTEEDPSPSLFSEEKEDPDKIDETEK) is disordered. Composition is skewed to basic and acidic residues over residues 259–273 (EIEKTSETKETKQEE) and 292–301 (DPDKIDETEK).

It belongs to the TIC214 family. As to quaternary structure, part of the Tic complex.

Its subcellular location is the plastid. It is found in the chloroplast inner membrane. Its function is as follows. Involved in protein precursor import into chloroplasts. May be part of an intermediate translocation complex acting as a protein-conducting channel at the inner envelope. This is Protein TIC 214 from Spinacia oleracea (Spinach).